The chain runs to 268 residues: Tryptophan synthase alpha chain (268 aa).

Active-site proton acceptor residues include E49 and D60.

Belongs to the TrpA family. As to quaternary structure, tetramer of two alpha and two beta chains.

It carries out the reaction (1S,2R)-1-C-(indol-3-yl)glycerol 3-phosphate + L-serine = D-glyceraldehyde 3-phosphate + L-tryptophan + H2O. It participates in amino-acid biosynthesis; L-tryptophan biosynthesis; L-tryptophan from chorismate: step 5/5. The alpha subunit is responsible for the aldol cleavage of indoleglycerol phosphate to indole and glyceraldehyde 3-phosphate. The protein is Tryptophan synthase alpha chain of Aeromonas hydrophila subsp. hydrophila (strain ATCC 7966 / DSM 30187 / BCRC 13018 / CCUG 14551 / JCM 1027 / KCTC 2358 / NCIMB 9240 / NCTC 8049).